We begin with the raw amino-acid sequence, 382 residues long: Telomere-binding protein OPG082 (382 aa).

The protein belongs to the orthopoxvirus OPG082 family.

The protein resides in the virion. Binds to the hairpin form of the viral telomeric sequence. Might direct genome encapsidation into the virus particle. In Variola virus (isolate Human/India/Ind3/1967) (VARV), this protein is Telomere-binding protein OPG082 (OPG082).